The primary structure comprises 271 residues: Fatty acid elongase A (271 aa).

7 consecutive transmembrane segments (helical) span residues 35–55 (ILFP…LQIF), 68–88 (AMFH…GIVI), 102–122 (IICK…FYLS), 139–159 (SLLF…WANL), 165–185 (CQWV…FYYF), 198–220 (HITT…WHFY), and 237–257 (TSAF…QFFV).

The protein belongs to the ELO family.

It localises to the membrane. The enzyme catalyses a very-long-chain acyl-CoA + malonyl-CoA + H(+) = a very-long-chain 3-oxoacyl-CoA + CO2 + CoA. Its function is as follows. Fatty acid elongase with strict substrate specificity for monounsaturated fatty acids, in particular 16:1 (delta-9) to produce the unusual 18:1 (delta-11) fatty acid. The sequence is that of Fatty acid elongase A (eloA) from Dictyostelium discoideum (Social amoeba).